Reading from the N-terminus, the 204-residue chain is Holliday junction branch migration complex subunit RuvA (204 aa).

Residues 1–64 (MIGRLCGTAE…EDAITLFGFI (64 aa)) are domain I. The domain II stretch occupies residues 65-143 (DAAERDWFRL…AMPTGSAFIP (79 aa)). Residues 144 to 154 (TGTAPPVAPPQ) are flexible linker. A domain III region spans residues 154 to 204 (QGKLADALSALVNLGYRRAEAEAALSAVQAEAGEDAALDELIRGGLRRLAR).

Belongs to the RuvA family. As to quaternary structure, homotetramer. Forms an RuvA(8)-RuvB(12)-Holliday junction (HJ) complex. HJ DNA is sandwiched between 2 RuvA tetramers; dsDNA enters through RuvA and exits via RuvB. An RuvB hexamer assembles on each DNA strand where it exits the tetramer. Each RuvB hexamer is contacted by two RuvA subunits (via domain III) on 2 adjacent RuvB subunits; this complex drives branch migration. In the full resolvosome a probable DNA-RuvA(4)-RuvB(12)-RuvC(2) complex forms which resolves the HJ.

The protein resides in the cytoplasm. Functionally, the RuvA-RuvB-RuvC complex processes Holliday junction (HJ) DNA during genetic recombination and DNA repair, while the RuvA-RuvB complex plays an important role in the rescue of blocked DNA replication forks via replication fork reversal (RFR). RuvA specifically binds to HJ cruciform DNA, conferring on it an open structure. The RuvB hexamer acts as an ATP-dependent pump, pulling dsDNA into and through the RuvAB complex. HJ branch migration allows RuvC to scan DNA until it finds its consensus sequence, where it cleaves and resolves the cruciform DNA. This Acidiphilium cryptum (strain JF-5) protein is Holliday junction branch migration complex subunit RuvA.